The chain runs to 593 residues: Probable tripeptidyl-peptidase SED3 (593 aa).

The first 18 residues, 1-18 (MLLRWHSVIPLFLTMTVA), serve as a signal peptide directing secretion. A propeptide spans 19–198 (LPNTYRTVVE…SLQVIYSSTN (180 aa)) (removed in mature form). Residues N198, N204, N261, and N275 are each glycosylated (N-linked (GlcNAc...) asparagine). In terms of domain architecture, Peptidase S53 spans 206–592 (TITPRCLREL…RILAKIVQHM (387 aa)). Catalysis depends on charge relay system residues E282 and D286. Residue N295 is glycosylated (N-linked (GlcNAc...) asparagine). Residue S496 is the Charge relay system of the active site. Residues D538 and I539 each coordinate Ca(2+). N-linked (GlcNAc...) asparagine glycans are attached at residues N554 and N566. Positions 570 and 572 each coordinate Ca(2+).

Ca(2+) is required as a cofactor.

Its subcellular location is the secreted. It localises to the extracellular space. It carries out the reaction Release of an N-terminal tripeptide from a polypeptide.. Its function is as follows. Secreted tripeptidyl-peptidase which degrades proteins at acidic pHs and is involved in virulence. The chain is Probable tripeptidyl-peptidase SED3 (SED3) from Trichophyton verrucosum (strain HKI 0517).